A 411-amino-acid polypeptide reads, in one-letter code: Pre-mRNA-splicing factor dre4 (411 aa).

A WW 1 domain is found at 3-36; it reads QPLPPGWTEHKAPSGIPYYWNAELKKSTYQRPSF. Residues 65–84 form a disordered region; sequence NAEERKNSRDLRKQLPDRPK. Residues 66 to 83 are compositionally biased toward basic and acidic residues; sequence AEERKNSRDLRKQLPDRP. The 34-residue stretch at 89 to 122 folds into the WW 2 domain; it reads IPNNDSWVVVFTKKNRYFFHNLKSHESYWEPPLE. Residues 138–209 are disordered; that stretch reads ISKDSSQSQN…KSHSAEELEF (72 aa). Polar residues predominate over residues 140 to 151; that stretch reads KDSSQSQNVDSG. Over residues 152–166 the composition is skewed to basic and acidic residues; that stretch reads KTNHEEIHESRHLQT. Acidic residues predominate over residues 167–179; sequence EIEEPSGLEESSE. Residues 239 to 293 enclose the FF domain; sequence TDDARRVFTELLKDKNIGAYQPWELVYPKLLDDDRFYVLDSGERRKEVFEEYCKS.

Component of the spliceosomal complex. Interacts with prp19.

It is found in the nucleus. Its function is as follows. Component of the spliceosome involved in mRNA processing. This Schizosaccharomyces pombe (strain 972 / ATCC 24843) (Fission yeast) protein is Pre-mRNA-splicing factor dre4 (dre4).